The chain runs to 117 residues: MTHAHITSWLITIVLFFLAVSMERQGAGKAKIVQMVLRLFYILTIVTGLLLLHSIASISALYWLKALAGLWVIGAMEMVLAAEKKGKSAAARWTQWVIALAVTLFLGLLLPLGFDLF.

4 consecutive transmembrane segments (helical) span residues 1–21 (MTHA…LAVS), 39–59 (LFYI…ASIS), 60–80 (ALYW…EMVL), and 97–117 (VIAL…FDLF).

This sequence belongs to the UPF0344 family.

The protein resides in the cell membrane. This Geobacillus kaustophilus (strain HTA426) protein is UPF0344 protein GK0697.